Here is a 207-residue protein sequence, read N- to C-terminus: Large ribosomal subunit protein uL4 (207 aa).

Residues 44 to 85 (MRQGTHKTKNRAEVSGGGRKPWRQKGTGRARQGSIRSPQWRG) form a disordered region.

This sequence belongs to the universal ribosomal protein uL4 family. In terms of assembly, part of the 50S ribosomal subunit.

Functionally, one of the primary rRNA binding proteins, this protein initially binds near the 5'-end of the 23S rRNA. It is important during the early stages of 50S assembly. It makes multiple contacts with different domains of the 23S rRNA in the assembled 50S subunit and ribosome. In terms of biological role, forms part of the polypeptide exit tunnel. The chain is Large ribosomal subunit protein uL4 from Geobacillus thermodenitrificans (strain NG80-2).